The sequence spans 687 residues: Glycine--tRNA ligase beta subunit (687 aa).

Belongs to the class-II aminoacyl-tRNA synthetase family. As to quaternary structure, tetramer of two alpha and two beta subunits.

It localises to the cytoplasm. The catalysed reaction is tRNA(Gly) + glycine + ATP = glycyl-tRNA(Gly) + AMP + diphosphate. The polypeptide is Glycine--tRNA ligase beta subunit (Geobacter sulfurreducens (strain ATCC 51573 / DSM 12127 / PCA)).